The following is a 219-amino-acid chain: Thiamine-phosphate synthase (219 aa).

Residues 48 to 52 (QFRQK) and N84 contribute to the 4-amino-2-methyl-5-(diphosphooxymethyl)pyrimidine site. Mg(2+)-binding residues include D85 and D104. S123 provides a ligand contact to 4-amino-2-methyl-5-(diphosphooxymethyl)pyrimidine. 150-152 (TPS) provides a ligand contact to 2-[(2R,5Z)-2-carboxy-4-methylthiazol-5(2H)-ylidene]ethyl phosphate. Residue K153 participates in 4-amino-2-methyl-5-(diphosphooxymethyl)pyrimidine binding. Residues G181 and 199–200 (IS) each bind 2-[(2R,5Z)-2-carboxy-4-methylthiazol-5(2H)-ylidene]ethyl phosphate.

The protein belongs to the thiamine-phosphate synthase family. Requires Mg(2+) as cofactor.

The enzyme catalyses 2-[(2R,5Z)-2-carboxy-4-methylthiazol-5(2H)-ylidene]ethyl phosphate + 4-amino-2-methyl-5-(diphosphooxymethyl)pyrimidine + 2 H(+) = thiamine phosphate + CO2 + diphosphate. It carries out the reaction 2-(2-carboxy-4-methylthiazol-5-yl)ethyl phosphate + 4-amino-2-methyl-5-(diphosphooxymethyl)pyrimidine + 2 H(+) = thiamine phosphate + CO2 + diphosphate. The catalysed reaction is 4-methyl-5-(2-phosphooxyethyl)-thiazole + 4-amino-2-methyl-5-(diphosphooxymethyl)pyrimidine + H(+) = thiamine phosphate + diphosphate. Its pathway is cofactor biosynthesis; thiamine diphosphate biosynthesis; thiamine phosphate from 4-amino-2-methyl-5-diphosphomethylpyrimidine and 4-methyl-5-(2-phosphoethyl)-thiazole: step 1/1. Condenses 4-methyl-5-(beta-hydroxyethyl)thiazole monophosphate (THZ-P) and 2-methyl-4-amino-5-hydroxymethyl pyrimidine pyrophosphate (HMP-PP) to form thiamine monophosphate (TMP). The sequence is that of Thiamine-phosphate synthase from Helicobacter pylori (strain ATCC 700392 / 26695) (Campylobacter pylori).